The chain runs to 124 residues: Small ribosomal subunit protein uS12 (124 aa).

Aspartate 89 carries the 3-methylthioaspartic acid modification.

It belongs to the universal ribosomal protein uS12 family. In terms of assembly, part of the 30S ribosomal subunit. Contacts proteins S8 and S17. May interact with IF1 in the 30S initiation complex.

Its function is as follows. With S4 and S5 plays an important role in translational accuracy. Interacts with and stabilizes bases of the 16S rRNA that are involved in tRNA selection in the A site and with the mRNA backbone. Located at the interface of the 30S and 50S subunits, it traverses the body of the 30S subunit contacting proteins on the other side and probably holding the rRNA structure together. The combined cluster of proteins S8, S12 and S17 appears to hold together the shoulder and platform of the 30S subunit. In Glaesserella parasuis serovar 5 (strain SH0165) (Haemophilus parasuis), this protein is Small ribosomal subunit protein uS12.